The chain runs to 237 residues: MGRKSSKAKEKKQKRLEERAAMDAVCAKVDAANRLGDPLEAFPVFKKYDRNGLNVSIECKRVSGLEPATVDWAFDLTKTNMQTMYEQSEWGWKDREKREEMTDDRAWYLIAWENSSIPVAFSHFRFDVECGDEVLYCYEVQLESKVRRKGLGKFLIQILQLMANSTQMKKVMLTVFKHNHGAYQFFREALQFEIDDSSPSMSGCCGEDCSYEILSRRTKFGDSQHSHTGGHCGGCCH.

Residue Gly2 is the site of N-myristoyl glycine attachment. The N-acetyltransferase domain occupies 63-216 (SGLEPATVDW…EDCSYEILSR (154 aa)). Substrate is bound by residues Tyr85, 127–129 (DVE), and Tyr138. Acetyl-CoA is bound by residues 140 to 142 (VQL) and 148 to 153 (RKGLGK). Thr174 is a binding site for substrate. Asn179 is an acetyl-CoA binding site. Ser197 and Tyr211 together coordinate substrate.

The protein belongs to the acetyltransferase family. NAA40 subfamily.

It is found in the cytoplasm. It localises to the nucleus. The enzyme catalyses N-terminal L-seryl-[histone H4] + acetyl-CoA = N-terminal N(alpha)-acetyl-L-seryl-[histone H4] + CoA + H(+). It carries out the reaction N-terminal L-seryl-[histone H2A] + acetyl-CoA = N-terminal N(alpha)-acetyl-L-seryl-[histone H2A] + CoA + H(+). N-alpha-acetyltransferase that specifically mediates the acetylation of the N-terminal residues of histones H4 and H2A. In contrast to other N-alpha-acetyltransferase, has a very specific selectivity for histones H4 and H2A N-terminus and specifically recognizes the 'Ser-Gly-Arg-Gly sequence'. Acts as a negative regulator of apoptosis. May play a role in hepatic lipid metabolism. This chain is N-alpha-acetyltransferase 40, found in Mus musculus (Mouse).